Here is a 258-residue protein sequence, read N- to C-terminus: Uroplakin-1a (258 aa).

Over 1–14 (MASAAAATTEKGSP) the chain is Cytoplasmic. Residues 15–35 (VVVGLLVMGNIIILLSGLALF) form a helical membrane-spanning segment. Over 36-59 (AETVWVTADQYRIYPLMGVSGKDD) the chain is Extracellular. A helical transmembrane segment spans residues 60–86 (VFAGAWIAIFCGFSFFVVASFGVGAAL). At 87–91 (CRRRS) the chain is on the cytoplasmic side. The helical transmembrane segment at 92–112 (MILTYLILMLIIYIFECASCI) threads the bilayer. Topologically, residues 113–230 (TSYTHRDYMV…HIGHAIDSYT (118 aa)) are extracellular. A glycan (N-linked (GlcNAc...) asparagine) is linked at Asn170. Residues 231–252 (WGISWFGFAILMWTLPVMLIAM) form a helical membrane-spanning segment. Topologically, residues 253–258 (YFYTTL) are cytoplasmic.

Belongs to the tetraspanin (TM4SF) family. As to quaternary structure, homodimer; disulfide-linked. Interacts with uroplakin-2 (UPK2). The N-terminus is blocked. In terms of processing, N-glycosylated with high-mannose oligosaccharides. Bladder epithelium.

Its subcellular location is the membrane. Its function is as follows. Component of the asymmetric unit membrane (AUM); a highly specialized biomembrane elaborated by terminally differentiated urothelial cells. May play an important role in normal bladder epithelial physiology, possibly in regulating membrane permeability of superficial umbrella cells or in stabilizing the apical membrane through AUM/cytoskeletal interactions. The sequence is that of Uroplakin-1a (UPK1A) from Bos taurus (Bovine).